An 832-amino-acid chain; its full sequence is uncharacterized protein (832 aa).

This is an uncharacterized protein from Rickettsia bellii (strain RML369-C).